The primary structure comprises 298 residues: Ribosomal protein L11 methyltransferase (298 aa).

4 residues coordinate S-adenosyl-L-methionine: T148, G169, D191, and N233.

The protein belongs to the methyltransferase superfamily. PrmA family.

Its subcellular location is the cytoplasm. It carries out the reaction L-lysyl-[protein] + 3 S-adenosyl-L-methionine = N(6),N(6),N(6)-trimethyl-L-lysyl-[protein] + 3 S-adenosyl-L-homocysteine + 3 H(+). Functionally, methylates ribosomal protein L11. The protein is Ribosomal protein L11 methyltransferase of Marinobacter nauticus (strain ATCC 700491 / DSM 11845 / VT8) (Marinobacter aquaeolei).